The primary structure comprises 395 residues: Chaperone protein DnaJ 2 (395 aa).

In terms of domain architecture, J spans 10–75 (DYYADLGVSK…TKRREYDDLK (66 aa)). The CR-type zinc finger occupies 165–242 (GTTIPVELTG…CRGRGTVRRT (78 aa)). 8 residues coordinate Zn(2+): Cys178, Cys181, Cys194, Cys197, Cys216, Cys219, Cys230, and Cys233. CXXCXGXG motif repeat units lie at residues 178–185 (CNTCHGSG), 194–201 (CGQCNGSG), 216–223 (CTNCGGTG), and 230–237 (CVDCRGRG).

It belongs to the DnaJ family. In terms of assembly, homodimer. The cofactor is Zn(2+).

The protein localises to the cytoplasm. Participates actively in the response to hyperosmotic and heat shock by preventing the aggregation of stress-denatured proteins and by disaggregating proteins, also in an autonomous, DnaK-independent fashion. Unfolded proteins bind initially to DnaJ; upon interaction with the DnaJ-bound protein, DnaK hydrolyzes its bound ATP, resulting in the formation of a stable complex. GrpE releases ADP from DnaK; ATP binding to DnaK triggers the release of the substrate protein, thus completing the reaction cycle. Several rounds of ATP-dependent interactions between DnaJ, DnaK and GrpE are required for fully efficient folding. Also involved, together with DnaK and GrpE, in the DNA replication of plasmids through activation of initiation proteins. This Corynebacterium efficiens (strain DSM 44549 / YS-314 / AJ 12310 / JCM 11189 / NBRC 100395) protein is Chaperone protein DnaJ 2.